Reading from the N-terminus, the 507-residue chain is FLYWCH transcription factor 1 (507 aa).

A compositionally biased stretch (low complexity) spans 1-26 (MYSPESMNSNISSPSPPSSSSLNAPS). The interval 1 to 51 (MYSPESMNSNISSPSPPSSSSLNAPSLADAPEVRSDDGEAETSEPSTSVTA) is disordered. An FLYWCH-type zinc finger spans residues 135-192 (KKTRLKVFSNGFFMTFDKLSSCQKKYFWRCEYKNTCKARMHTDIVTEKILTFIHEHNH).

Functionally, probable transcription factor. Binds to the DNA sequence motif 5'-[AG]GGCGCCG-3' in the promoters of target genes, including micro-RNA genes, in order to repress expression, and acting redundantly with flh-2. This Caenorhabditis elegans protein is FLYWCH transcription factor 1.